The sequence spans 466 residues: Cysteine--tRNA ligase (466 aa).

Cysteine 28 is a Zn(2+) binding site. The short motif at 30-40 (PTVYNYIHIGN) is the 'HIGH' region element. Residues cysteine 208, histidine 233, and glutamate 237 each coordinate Zn(2+). The 'KMSKS' region motif lies at 265-269 (KMSKS). Residue lysine 268 coordinates ATP.

It belongs to the class-I aminoacyl-tRNA synthetase family. As to quaternary structure, monomer. Zn(2+) is required as a cofactor.

Its subcellular location is the cytoplasm. It carries out the reaction tRNA(Cys) + L-cysteine + ATP = L-cysteinyl-tRNA(Cys) + AMP + diphosphate. This Staphylococcus aureus (strain MSSA476) protein is Cysteine--tRNA ligase.